We begin with the raw amino-acid sequence, 203 residues long: Probable cytochrome c oxidase subunit 3 (203 aa).

A run of 5 helical transmembrane segments spans residues Ile-30–Ala-50, Ala-70–Ala-90, Trp-102–Tyr-122, Leu-142–Leu-162, and Ile-179–Ile-199.

The protein belongs to the cytochrome c oxidase subunit 3 family.

It localises to the cell membrane. The enzyme catalyses 4 Fe(II)-[cytochrome c] + O2 + 8 H(+)(in) = 4 Fe(III)-[cytochrome c] + 2 H2O + 4 H(+)(out). This is Probable cytochrome c oxidase subunit 3 (ctaE) from Mycolicibacterium paratuberculosis (strain ATCC BAA-968 / K-10) (Mycobacterium paratuberculosis).